Consider the following 355-residue polypeptide: Probable L-aspartate decarboxylase (355 aa).

K210 is subject to N6-(pyridoxal phosphate)lysine.

It belongs to the group II decarboxylase family. MfnA subfamily. Pyridoxal 5'-phosphate serves as cofactor.

It carries out the reaction L-aspartate + H(+) = beta-alanine + CO2. It participates in cofactor biosynthesis; coenzyme A biosynthesis. Catalyzes the decarboxylation of L-aspartate to produce beta-alanine. The polypeptide is Probable L-aspartate decarboxylase (Halobacterium salinarum (strain ATCC 29341 / DSM 671 / R1)).